Here is a 452-residue protein sequence, read N- to C-terminus: Imidazoleglycerol-phosphate dehydratase (452 aa).

Residues 1–233 are unknown activity; it reads MASPVQALLL…VGASVVLTPG (233 aa). Residues 234-452 are imidazoleglycerol-phosphate dehydratase; the sequence is LGELLDLVPA…GVPSTKGVLA (219 aa).

This sequence belongs to the imidazoleglycerol-phosphate dehydratase family.

The catalysed reaction is D-erythro-1-(imidazol-4-yl)glycerol 3-phosphate = 3-(imidazol-4-yl)-2-oxopropyl phosphate + H2O. Its pathway is amino-acid biosynthesis; L-histidine biosynthesis; L-histidine from 5-phospho-alpha-D-ribose 1-diphosphate: step 6/9. The polypeptide is Imidazoleglycerol-phosphate dehydratase (HIS3) (Phytophthora nicotianae (Potato buckeye rot agent)).